An 85-amino-acid chain; its full sequence is Large ribosomal subunit protein bL27 (85 aa).

It belongs to the bacterial ribosomal protein bL27 family.

The sequence is that of Large ribosomal subunit protein bL27 from Pseudomonas fluorescens (strain SBW25).